Consider the following 135-residue polypeptide: Fatty acid-binding protein 5 (135 aa).

Position 2 is an N-acetylalanine (A2). Residue K17 is modified to N6-acetyllysine. The Nuclear localization signal signature appears at 24-34 (KELGVGIALRK). N-eicosanoyl ethanolamine is bound by residues C43 and R109. An intrachain disulfide couples C120 to C127. 129–131 (RIY) serves as a coordination point for (9Z,12Z)-octadecadienoate. Y131 contacts N-eicosanoyl ethanolamine. Y131 is a binding site for hexadecanoate. Y131 carries the phosphotyrosine modification.

The protein belongs to the calycin superfamily. Fatty-acid binding protein (FABP) family. Monomer. Homodimer. In terms of tissue distribution, keratinocytes; highly expressed in psoriatic skin. Expressed in brain gray matter.

The protein resides in the cytoplasm. The protein localises to the nucleus. It localises to the synapse. Its subcellular location is the postsynaptic density. It is found in the secreted. It carries out the reaction hexadecanoate(out) = hexadecanoate(in). The catalysed reaction is (9Z,12Z)-octadecadienoate(out) = (9Z,12Z)-octadecadienoate(in). The enzyme catalyses (9Z)-octadecenoate(out) = (9Z)-octadecenoate(in). Functionally, intracellular carrier for long-chain fatty acids and related active lipids, such as endocannabinoids, that regulate the metabolism and actions of the ligands they bind. In addition to the cytosolic transport, selectively delivers specific fatty acids from the cytosol to the nucleus, wherein they activate nuclear receptors. Delivers retinoic acid to the nuclear receptor peroxisome proliferator-activated receptor delta; which promotes proliferation and survival. May also serve as a synaptic carrier of endocannabinoid at central synapses and thus controls retrograde endocannabinoid signaling. Modulates inflammation by regulating PTGES induction via NF-kappa-B activation, and prostaglandin E2 (PGE2) biosynthesis during inflammation. May be involved in keratinocyte differentiation. This is Fatty acid-binding protein 5 from Homo sapiens (Human).